Here is a 147-residue protein sequence, read N- to C-terminus: Molybdopterin synthase catalytic subunit 1 (147 aa).

Substrate-binding positions include 43–45 (NVR), 109–110 (HR), Lys-125, and 132–134 (KKE).

This sequence belongs to the MoaE family. In terms of assembly, heterotetramer of 2 MoaD subunits and 2 MoaE subunits. Also stable as homodimer. The enzyme changes between these two forms during catalysis.

It catalyses the reaction 2 [molybdopterin-synthase sulfur-carrier protein]-C-terminal-Gly-aminoethanethioate + cyclic pyranopterin phosphate + H2O = molybdopterin + 2 [molybdopterin-synthase sulfur-carrier protein]-C-terminal Gly-Gly + 2 H(+). The protein operates within cofactor biosynthesis; molybdopterin biosynthesis. Functionally, converts molybdopterin precursor Z into molybdopterin. This requires the incorporation of two sulfur atoms into precursor Z to generate a dithiolene group. The sulfur is provided by MoaD. The polypeptide is Molybdopterin synthase catalytic subunit 1 (moaE1) (Mycobacterium tuberculosis (strain ATCC 25618 / H37Rv)).